The following is a 492-amino-acid chain: Variant surface glycoprotein MITAT 1.1 (492 aa).

A signal peptide spans 1–32 (MATGRAKNTKWARWLSTAGLIIVVTLPATTMA). 2 disulfide bridges follow: cysteine 47/cysteine 177 and cysteine 155/cysteine 222. Asparagine 298 and asparagine 471 each carry an N-linked (GlcNAc...) asparagine glycan. The GPI-anchor amidated serine moiety is linked to residue serine 475. The propeptide at 476 to 492 (NSFLIHKAPLLLAFLLF) is removed in mature form.

It localises to the cell membrane. Functionally, VSG forms a coat on the surface of the parasite. The trypanosome evades the immune response of the host by expressing a series of antigenically distinct VSGs from an estimated 1000 VSG genes. The chain is Variant surface glycoprotein MITAT 1.1 from Trypanosoma brucei brucei.